A 393-amino-acid polypeptide reads, in one-letter code: NAD(P)H-quinone oxidoreductase subunit H, chloroplastic (393 aa).

The protein belongs to the complex I 49 kDa subunit family. As to quaternary structure, NDH is composed of at least 16 different subunits, 5 of which are encoded in the nucleus.

The protein localises to the plastid. Its subcellular location is the chloroplast thylakoid membrane. The catalysed reaction is a plastoquinone + NADH + (n+1) H(+)(in) = a plastoquinol + NAD(+) + n H(+)(out). The enzyme catalyses a plastoquinone + NADPH + (n+1) H(+)(in) = a plastoquinol + NADP(+) + n H(+)(out). NDH shuttles electrons from NAD(P)H:plastoquinone, via FMN and iron-sulfur (Fe-S) centers, to quinones in the photosynthetic chain and possibly in a chloroplast respiratory chain. The immediate electron acceptor for the enzyme in this species is believed to be plastoquinone. Couples the redox reaction to proton translocation, and thus conserves the redox energy in a proton gradient. The chain is NAD(P)H-quinone oxidoreductase subunit H, chloroplastic from Angiopteris evecta (Mule's foot fern).